The sequence spans 518 residues: MVRSGKNGDLHLKQIAYYKRTGEYHPTTLSSERSGIRRAAKKFVFKEKKLFYVGKDRKQNRLVVVSEEEKKKVLRECHENGPGVHHGISRTLTLVESSYYWTSVTNDVKQWVYACQHCQVAKSTVIVAPQQHLSVVGNPWSVVTVDLMGPFHTSSRSHVYAMIMTDLFTKWVMILPLCDVSASEISKAIINIFFLYGPPQKIIMDQRDEFIDQINVELYRLFGAKEIVISQASGSVNPSESTPSTVKTFLSKHCAEHPETWDEELPALSFAFNVTRVEPTKNSPYFQMFNRNPCLLECPHEGGGEGTSVFARIVAAVREADGVVENQTPAAGQMESSTSEELSKSKVAKKKPKQLNPFHLKVGHEVLRQRKNWWKDGRFQSEWVGPCVIDYITDSGCAVLRDNTGTRLKRPIKMSHLRPYVREPSEQDSLYLLQGSIVADHDYIGLPEIPVGTYQANILVEDATIGIVDNELLISSKDHELLEYRNSKISALVEDHSSLEKQTFSLLDSSNQVLEYLS.

The region spanning 135 to 293 (VVGNPWSVVT…PYFQMFNRNP (159 aa)) is the Integrase catalytic domain. The interval 326-348 (NQTPAAGQMESSTSEELSKSKVA) is disordered. The residue at position 498 (Ser-498) is a Phosphoserine.

The polypeptide is Gypsy retrotransposon integrase-like protein 1 (GIN1) (Rattus norvegicus (Rat)).